A 419-amino-acid polypeptide reads, in one-letter code: Mitogen-activated protein kinase spm1 (419 aa).

In terms of domain architecture, Protein kinase spans 23–314 (YTVTKELGQG…VEEALEHPYL (292 aa)). ATP-binding positions include 29–37 (LGQGAYGIV) and K52. Residue D149 is the Proton acceptor of the active site.

Belongs to the protein kinase superfamily. Ser/Thr protein kinase family. MAP kinase subfamily. It depends on Mg(2+) as a cofactor. Phosphorylated by the MAP kinase kinase mkk1.

The enzyme catalyses L-seryl-[protein] + ATP = O-phospho-L-seryl-[protein] + ADP + H(+). The catalysed reaction is L-threonyl-[protein] + ATP = O-phospho-L-threonyl-[protein] + ADP + H(+). Its function is as follows. Mitogen-activated protein kinase, part of the mkh1-mkk1-spm1 MAPK cascade that regulates vegetative growth, conidial formation, colony surface hydrophobicity, osmotic stress, cell wall integrity maintenance, carbon and nitrogen source utilization, chitin distribution, septa formation, and pathogenicity. This is Mitogen-activated protein kinase spm1 from Cytospora mali (Apple Valsa canker fungus).